The following is a 98-amino-acid chain: HssA/B-like protein 50 (98 aa).

2 disordered regions span residues 1 to 26 (MTLF…SFGS) and 68 to 98 (TRGS…CCGI). A compositionally biased stretch (gly residues) spans 84–98 (GHGGMGGGNGSCCGI).

It belongs to the hssA/B family.

The protein is HssA/B-like protein 50 (hssl50) of Dictyostelium discoideum (Social amoeba).